The following is a 328-amino-acid chain: Ethanol acetyltransferase 1 (328 aa).

One can recognise an AB hydrolase-1 domain in the interval Pro-39–Pro-309. Active-site charge relay system residues include Ser-115, Asp-139, and His-302.

The protein belongs to the AB hydrolase superfamily.

The protein localises to the mitochondrion. It catalyses the reaction ethanol + acetyl-CoA = ethyl acetate + CoA. The enzyme catalyses acetyl-CoA + H2O = acetate + CoA + H(+). It carries out the reaction ethyl acetate + H2O = ethanol + acetate + H(+). Functionally, alcohol acetyltransferase that catalyzes the synthesis of ethyl acetate from ethanol and acetyl-CoA. Can also function as a thioesterase by hydrolyzing acetyl-CoA in the absence of ethanol, as well as esterase hydrolyzing ethyl acetate. This is Ethanol acetyltransferase 1 from Saccharomyces cerevisiae (strain ATCC 204508 / S288c) (Baker's yeast).